We begin with the raw amino-acid sequence, 161 residues long: Type-1 angiotensin II receptor-associated protein (161 aa).

Residues 1-26 lie on the Extracellular side of the membrane; sequence MELPAVNLKVILLVHWLLTTWGCLVF. The helical transmembrane segment at 27–47 threads the bilayer; sequence SSSYAWGNFTILALGVWAVAQ. Residues 48-53 lie on the Cytoplasmic side of the membrane; sequence RDSIDA. The chain crosses the membrane as a helical span at residues 54 to 74; that stretch reads IGMFLGGLVATIFLDIIYISI. Residues 75–86 are Extracellular-facing; sequence FYSSVATGDTGR. Residues 87–107 traverse the membrane as a helical segment; it reads FGAGMAILSLLLKPFSCCLVY. The Cytoplasmic segment spans residues 108 to 161; sequence HMHRERGGELPLRPDFFGPSQEHSAYQTIDSSSDAAADPFASLENKGQAVPRGY. The interaction with AGTR1 stretch occupies residues 110 to 122; it reads HRERGGELPLRPD. At Ser127 the chain carries Phosphoserine. Residue Thr135 is modified to Phosphothreonine. A Phosphoserine modification is found at Ser138.

In terms of assembly, interacts with RACK1, and with the C-terminal region of AGTR1. As to expression, ubiquitous but more abundant in kidney, testis and heart.

It is found in the endoplasmic reticulum membrane. The protein localises to the golgi apparatus membrane. The protein resides in the cytoplasmic vesicle membrane. Its function is as follows. Appears to be a negative regulator of type-1 angiotensin II receptor-mediated signaling by regulating receptor internalization as well as mechanism of receptor desensitization such as phosphorylation. Also induces a decrease in angiotensin II-stimulated transcriptional activity. May play a role of negative regulator in cardiomyocyte hypertrophy induced by angiotensin II through an inhibition of p38 mitogen-activated protein kinase pathway. The protein is Type-1 angiotensin II receptor-associated protein (Agtrap) of Mus musculus (Mouse).